A 605-amino-acid chain; its full sequence is Elongation factor 4 (605 aa).

Positions 8–190 constitute a tr-type G domain; it reads RRVRNFCIVA…AIITRIPPPQ (183 aa). GTP contacts are provided by residues 20–25 and 137–140; these read DHGKST and NKID.

This sequence belongs to the TRAFAC class translation factor GTPase superfamily. Classic translation factor GTPase family. LepA subfamily.

It is found in the cell inner membrane. It catalyses the reaction GTP + H2O = GDP + phosphate + H(+). In terms of biological role, required for accurate and efficient protein synthesis under certain stress conditions. May act as a fidelity factor of the translation reaction, by catalyzing a one-codon backward translocation of tRNAs on improperly translocated ribosomes. Back-translocation proceeds from a post-translocation (POST) complex to a pre-translocation (PRE) complex, thus giving elongation factor G a second chance to translocate the tRNAs correctly. Binds to ribosomes in a GTP-dependent manner. In Treponema pallidum (strain Nichols), this protein is Elongation factor 4.